Consider the following 162-residue polypeptide: Endoribonuclease YbeY (162 aa).

The Zn(2+) site is built by His-117, His-121, and His-127.

This sequence belongs to the endoribonuclease YbeY family. The cofactor is Zn(2+).

The protein resides in the cytoplasm. In terms of biological role, single strand-specific metallo-endoribonuclease involved in late-stage 70S ribosome quality control and in maturation of the 3' terminus of the 16S rRNA. The protein is Endoribonuclease YbeY of Francisella tularensis subsp. mediasiatica (strain FSC147).